The primary structure comprises 228 residues: UPF0758 protein NT01CX_1687 (228 aa).

Residues 106-228 enclose the MPN domain; the sequence is IIKSPGDVAG…YISLKEKNIL (123 aa). Positions 177, 179, and 190 each coordinate Zn(2+). Positions 177 to 190 match the JAMM motif motif; that stretch reads HNHPSGDPTPSSED.

Belongs to the UPF0758 family.

This is UPF0758 protein NT01CX_1687 from Clostridium novyi (strain NT).